Consider the following 474-residue polypeptide: Cysteine--tRNA ligase (474 aa).

Cys29 contacts Zn(2+). Residues 31–41 carry the 'HIGH' region motif; that stretch reads ITPYDHVHVGH. Zn(2+) is bound by residues Cys215, His240, and Glu244. The 'KMSKS' region motif lies at 273–277; the sequence is KMSKS. Lys276 is a binding site for ATP.

This sequence belongs to the class-I aminoacyl-tRNA synthetase family. It depends on Zn(2+) as a cofactor.

It is found in the cytoplasm. The catalysed reaction is tRNA(Cys) + L-cysteine + ATP = L-cysteinyl-tRNA(Cys) + AMP + diphosphate. The polypeptide is Cysteine--tRNA ligase (Pyrobaculum aerophilum (strain ATCC 51768 / DSM 7523 / JCM 9630 / CIP 104966 / NBRC 100827 / IM2)).